Reading from the N-terminus, the 179-residue chain is Deoxyuridine 5'-triphosphate nucleotidohydrolase (179 aa).

Residues 90-92, asparagine 103, 107-109, and lysine 117 contribute to the substrate site; these read RSG and TVD.

It belongs to the dUTPase family. Mg(2+) is required as a cofactor.

It catalyses the reaction dUTP + H2O = dUMP + diphosphate + H(+). The protein operates within pyrimidine metabolism; dUMP biosynthesis; dUMP from dCTP (dUTP route): step 2/2. In terms of biological role, this enzyme is involved in nucleotide metabolism: it produces dUMP, the immediate precursor of thymidine nucleotides and it decreases the intracellular concentration of dUTP so that uracil cannot be incorporated into DNA. This Thermobifida fusca (strain YX) protein is Deoxyuridine 5'-triphosphate nucleotidohydrolase.